We begin with the raw amino-acid sequence, 272 residues long: 1,4-dihydroxy-2-naphthoyl-CoA synthase (272 aa).

Substrate is bound by residues Arg-33, 72–76 (SGGDQ), Tyr-84, 116–120 (YAIGG), Thr-142, Ser-148, Tyr-245, and Lys-260. 141–143 (QTG) is a hydrogencarbonate binding site.

This sequence belongs to the enoyl-CoA hydratase/isomerase family. MenB subfamily. It depends on hydrogencarbonate as a cofactor.

The enzyme catalyses 2-succinylbenzoyl-CoA + H(+) = 1,4-dihydroxy-2-naphthoyl-CoA + H2O. It participates in quinol/quinone metabolism; 1,4-dihydroxy-2-naphthoate biosynthesis; 1,4-dihydroxy-2-naphthoate from chorismate: step 6/7. Its pathway is quinol/quinone metabolism; menaquinone biosynthesis. Functionally, converts o-succinylbenzoyl-CoA (OSB-CoA) to 1,4-dihydroxy-2-naphthoyl-CoA (DHNA-CoA). This Staphylococcus epidermidis (strain ATCC 35984 / DSM 28319 / BCRC 17069 / CCUG 31568 / BM 3577 / RP62A) protein is 1,4-dihydroxy-2-naphthoyl-CoA synthase.